The sequence spans 334 residues: Holliday junction branch migration complex subunit RuvB (334 aa).

Positions 4–186 (ADRLIAPENP…FGITQRLEYY (183 aa)) are large ATPase domain (RuvB-L). ATP is bound by residues I25, R26, G67, K70, T71, T72, 133 to 135 (EDY), R176, Y186, and R223. Mg(2+) is bound at residue T71. The segment at 187-257 (KVKDLQDIVQ…TADKALNMLD (71 aa)) is small ATPAse domain (RuvB-S). The segment at 260-334 (AEGFDYMDRK…RAYLHFGIEK (75 aa)) is head domain (RuvB-H). DNA contacts are provided by R315 and R320.

The protein belongs to the RuvB family. In terms of assembly, homohexamer. Forms an RuvA(8)-RuvB(12)-Holliday junction (HJ) complex. HJ DNA is sandwiched between 2 RuvA tetramers; dsDNA enters through RuvA and exits via RuvB. An RuvB hexamer assembles on each DNA strand where it exits the tetramer. Each RuvB hexamer is contacted by two RuvA subunits (via domain III) on 2 adjacent RuvB subunits; this complex drives branch migration. In the full resolvosome a probable DNA-RuvA(4)-RuvB(12)-RuvC(2) complex forms which resolves the HJ.

The protein localises to the cytoplasm. The catalysed reaction is ATP + H2O = ADP + phosphate + H(+). The RuvA-RuvB-RuvC complex processes Holliday junction (HJ) DNA during genetic recombination and DNA repair, while the RuvA-RuvB complex plays an important role in the rescue of blocked DNA replication forks via replication fork reversal (RFR). RuvA specifically binds to HJ cruciform DNA, conferring on it an open structure. The RuvB hexamer acts as an ATP-dependent pump, pulling dsDNA into and through the RuvAB complex. RuvB forms 2 homohexamers on either side of HJ DNA bound by 1 or 2 RuvA tetramers; 4 subunits per hexamer contact DNA at a time. Coordinated motions by a converter formed by DNA-disengaged RuvB subunits stimulates ATP hydrolysis and nucleotide exchange. Immobilization of the converter enables RuvB to convert the ATP-contained energy into a lever motion, pulling 2 nucleotides of DNA out of the RuvA tetramer per ATP hydrolyzed, thus driving DNA branch migration. The RuvB motors rotate together with the DNA substrate, which together with the progressing nucleotide cycle form the mechanistic basis for DNA recombination by continuous HJ branch migration. Branch migration allows RuvC to scan DNA until it finds its consensus sequence, where it cleaves and resolves cruciform DNA. The protein is Holliday junction branch migration complex subunit RuvB of Vibrio campbellii (strain ATCC BAA-1116).